We begin with the raw amino-acid sequence, 635 residues long: Threonine--tRNA ligase (635 aa).

A TGS domain is found at 1–61 (MVSIRLPDGS…DHDVALAIVT (61 aa)). A catalytic region spans residues 242–533 (DHRKLGKQLD…LIEHHAGAMP (292 aa)). Zn(2+)-binding residues include cysteine 333, histidine 384, and histidine 510.

The protein belongs to the class-II aminoacyl-tRNA synthetase family. In terms of assembly, homodimer. Requires Zn(2+) as cofactor.

It localises to the cytoplasm. The catalysed reaction is tRNA(Thr) + L-threonine + ATP = L-threonyl-tRNA(Thr) + AMP + diphosphate + H(+). In terms of biological role, catalyzes the attachment of threonine to tRNA(Thr) in a two-step reaction: L-threonine is first activated by ATP to form Thr-AMP and then transferred to the acceptor end of tRNA(Thr). Also edits incorrectly charged L-seryl-tRNA(Thr). The sequence is that of Threonine--tRNA ligase from Paraburkholderia phymatum (strain DSM 17167 / CIP 108236 / LMG 21445 / STM815) (Burkholderia phymatum).